Reading from the N-terminus, the 130-residue chain is uncharacterized protein (130 aa).

This is an uncharacterized protein from Citrus leprosis virus C (isolate Citrus sinesis/Brazil/Cordeiropolis/2003) (CiLV-C).